The chain runs to 186 residues: Large ribosomal subunit protein uL5 (186 aa).

This sequence belongs to the universal ribosomal protein uL5 family. Part of the 50S ribosomal subunit; part of the 5S rRNA/L5/L18/L25 subcomplex. Contacts the 5S rRNA and the P site tRNA. Forms a bridge to the 30S subunit in the 70S ribosome.

In terms of biological role, this is one of the proteins that bind and probably mediate the attachment of the 5S RNA into the large ribosomal subunit, where it forms part of the central protuberance. In the 70S ribosome it contacts protein S13 of the 30S subunit (bridge B1b), connecting the 2 subunits; this bridge is implicated in subunit movement. Contacts the P site tRNA; the 5S rRNA and some of its associated proteins might help stabilize positioning of ribosome-bound tRNAs. The protein is Large ribosomal subunit protein uL5 of Jannaschia sp. (strain CCS1).